The following is a 76-amino-acid chain: Alpha-amylase inhibitor Z-2685 (76 aa).

Disulfide bonds link Cys9-Cys25 and Cys43-Cys70.

Inhibits mammalian alpha-amylases specifically but has no action on plant and microbial alpha-amylases. This chain is Alpha-amylase inhibitor Z-2685, found in Streptomyces rochei (Streptomyces parvullus).